Here is a 326-residue protein sequence, read N- to C-terminus: uncharacterized protein (326 aa).

127-134 (GATGSGKS) is a binding site for ATP.

Belongs to the GSP E family.

This is an uncharacterized protein from Escherichia coli (strain K12).